The primary structure comprises 491 residues: Ketol-acid reductoisomerase (NADP(+)) (491 aa).

The region spanning Ala15–Ser208 is the KARI N-terminal Rossmann domain. NADP(+) contacts are provided by residues Cys45–Gln48, Arg68, Arg76, Ser78, and Asp108–Gln110. His132 is a catalytic residue. Gly158 serves as a coordination point for NADP(+). 2 consecutive KARI C-terminal knotted domains span residues Ser209–Gln344 and Phe345–Met484. Mg(2+)-binding residues include Asp217, Glu221, Glu389, and Glu393. A substrate-binding site is contributed by Ser414.

This sequence belongs to the ketol-acid reductoisomerase family. The cofactor is Mg(2+).

The enzyme catalyses (2R)-2,3-dihydroxy-3-methylbutanoate + NADP(+) = (2S)-2-acetolactate + NADPH + H(+). It catalyses the reaction (2R,3R)-2,3-dihydroxy-3-methylpentanoate + NADP(+) = (S)-2-ethyl-2-hydroxy-3-oxobutanoate + NADPH + H(+). It functions in the pathway amino-acid biosynthesis; L-isoleucine biosynthesis; L-isoleucine from 2-oxobutanoate: step 2/4. The protein operates within amino-acid biosynthesis; L-valine biosynthesis; L-valine from pyruvate: step 2/4. Its function is as follows. Involved in the biosynthesis of branched-chain amino acids (BCAA). Catalyzes an alkyl-migration followed by a ketol-acid reduction of (S)-2-acetolactate (S2AL) to yield (R)-2,3-dihydroxy-isovalerate. In the isomerase reaction, S2AL is rearranged via a Mg-dependent methyl migration to produce 3-hydroxy-3-methyl-2-ketobutyrate (HMKB). In the reductase reaction, this 2-ketoacid undergoes a metal-dependent reduction by NADPH to yield (R)-2,3-dihydroxy-isovalerate. This Salmonella schwarzengrund (strain CVM19633) protein is Ketol-acid reductoisomerase (NADP(+)).